The following is a 497-amino-acid chain: Glycerol kinase (497 aa).

T13 provides a ligand contact to ADP. Residues T13, T14, and S15 each coordinate ATP. A sn-glycerol 3-phosphate-binding site is contributed by T13. Position 17 (R17) interacts with ADP. The sn-glycerol 3-phosphate site is built by R83, E84, and Y135. Residues R83, E84, and Y135 each coordinate glycerol. H231 is subject to Phosphohistidine; by HPr. D245 is a binding site for sn-glycerol 3-phosphate. Glycerol-binding residues include D245 and Q246. Positions 267 and 310 each coordinate ADP. Residues T267, G310, Q314, and G411 each coordinate ATP. 2 residues coordinate ADP: G411 and N415.

It belongs to the FGGY kinase family. Homotetramer and homodimer (in equilibrium). Post-translationally, the phosphoenolpyruvate-dependent sugar phosphotransferase system (PTS), including enzyme I, and histidine-containing protein (HPr) are required for the phosphorylation, which leads to the activation of the enzyme.

The catalysed reaction is glycerol + ATP = sn-glycerol 3-phosphate + ADP + H(+). It functions in the pathway polyol metabolism; glycerol degradation via glycerol kinase pathway; sn-glycerol 3-phosphate from glycerol: step 1/1. Activated by phosphorylation and inhibited by fructose 1,6-bisphosphate (FBP). In terms of biological role, key enzyme in the regulation of glycerol uptake and metabolism. Catalyzes the phosphorylation of glycerol to yield sn-glycerol 3-phosphate. In Listeria welshimeri serovar 6b (strain ATCC 35897 / DSM 20650 / CCUG 15529 / CIP 8149 / NCTC 11857 / SLCC 5334 / V8), this protein is Glycerol kinase.